The primary structure comprises 210 residues: MSRKHLTARQQEIFDFVKHHIETTGMPPTRVEIAREIGFKSPNAAEEHLKALARKGYIEMLSGTSRGIRILVDNEETAANDDGLPLIGKVAAGTPIMAIEHVESHYPVNGAMFNPNADYLLKVNGNSMEKIGILDGDLLAVHKTNFARNGQVVVARVDDEVTVKRLEKKGDLIYLHPENDELQPIVVDPRIEYIEIEGIAVGVIRNNAWM.

A DNA-binding region (H-T-H motif) is located at residues 30 to 50 (RVEIAREIGFKSPNAAEEHLK). Residues serine 127 and lysine 164 each act as for autocatalytic cleavage activity in the active site.

It belongs to the peptidase S24 family. As to quaternary structure, homodimer.

The enzyme catalyses Hydrolysis of Ala-|-Gly bond in repressor LexA.. In terms of biological role, represses a number of genes involved in the response to DNA damage (SOS response), including recA and lexA. In the presence of single-stranded DNA, RecA interacts with LexA causing an autocatalytic cleavage which disrupts the DNA-binding part of LexA, leading to derepression of the SOS regulon and eventually DNA repair. The protein is LexA repressor of Actinobacillus pleuropneumoniae serotype 7 (strain AP76).